The chain runs to 384 residues: Lipid-A-disaccharide synthase 1 (384 aa).

Belongs to the LpxB family.

It carries out the reaction a lipid X + a UDP-2-N,3-O-bis[(3R)-3-hydroxyacyl]-alpha-D-glucosamine = a lipid A disaccharide + UDP + H(+). It functions in the pathway bacterial outer membrane biogenesis; LPS lipid A biosynthesis. Condensation of UDP-2,3-diacylglucosamine and 2,3-diacylglucosamine-1-phosphate to form lipid A disaccharide, a precursor of lipid A, a phosphorylated glycolipid that anchors the lipopolysaccharide to the outer membrane of the cell. This chain is Lipid-A-disaccharide synthase 1, found in Legionella pneumophila (strain Lens).